We begin with the raw amino-acid sequence, 158 residues long: Cytochrome c-type biogenesis protein CcmE (158 aa).

The Cytoplasmic segment spans residues 1 to 8 (MMRHRNRR). A helical; Signal-anchor for type II membrane protein membrane pass occupies residues 9–29 (LATIAASAIVLVVAVGLGLMA). The Periplasmic portion of the chain corresponds to 30-158 (LRSAVVFFYS…PSAAGDGDSR (129 aa)). Heme is bound by residues His123 and Tyr127. Residues 139-158 (AGVWQGEGETPSAAGDGDSR) are disordered.

It belongs to the CcmE/CycJ family.

Its subcellular location is the cell inner membrane. Its function is as follows. Heme chaperone required for the biogenesis of c-type cytochromes. Transiently binds heme delivered by CcmC and transfers the heme to apo-cytochromes in a process facilitated by CcmF and CcmH. This Maricaulis maris (strain MCS10) (Caulobacter maris) protein is Cytochrome c-type biogenesis protein CcmE.